A 293-amino-acid polypeptide reads, in one-letter code: Exosome complex component RRP4 (293 aa).

In terms of domain architecture, S1 motif spans Glu79–Arg159. Ser124 is modified (phosphoserine).

Belongs to the RRP4 family. In terms of assembly, component of the RNA exosome core complex (Exo-9), composed of EXOSC1, EXOSC2, EXOSC3, EXOSC4, EXOSC5, EXOSC6, EXOSC7, EXOSC8 and EXOSC9; within the complex interacts with EXOSC4 and EXOSC7. The catalytically inactive RNA exosome core complex (Exo-9) associates with the catalytic subunit EXOSC10/RRP6. Exo-9 may associate with DIS3 to form the nucleolar exosome complex, or DIS3L to form the cytoplasmic exosome complex. Exo-9 is formed by a hexameric base ring consisting of the heterodimers EXOSC4-EXOSC9, EXOSC5-EXOSC8 and EXOSC6-EXOSC7, and a cap ring consisting of EXOSC1, EXOSC2 and EXOSC3. The RNA exosome complex associates with cofactors C1D/RRP47, MPHOSPH6/MPP6 and MTREX/MTR4. Interacts with GTPBP1. Interacts with ZFP36L1 (via N-terminus).

Its subcellular location is the cytoplasm. The protein resides in the nucleus. The protein localises to the nucleolus. Non-catalytic component of the RNA exosome complex which has 3'-&gt;5' exoribonuclease activity and participates in a multitude of cellular RNA processing and degradation events. In the nucleus, the RNA exosome complex is involved in proper maturation of stable RNA species such as rRNA, snRNA and snoRNA, in the elimination of RNA processing by-products and non-coding 'pervasive' transcripts, such as antisense RNA species and promoter-upstream transcripts (PROMPTs), and of mRNAs with processing defects, thereby limiting or excluding their export to the cytoplasm. The RNA exosome may be involved in Ig class switch recombination (CSR) and/or Ig variable region somatic hypermutation (SHM) by targeting AICDA deamination activity to transcribed dsDNA substrates. In the cytoplasm, the RNA exosome complex is involved in general mRNA turnover and specifically degrades inherently unstable mRNAs containing AU-rich elements (AREs) within their 3' untranslated regions, and in RNA surveillance pathways, preventing translation of aberrant mRNAs. It seems to be involved in degradation of histone mRNA. The catalytic inactive RNA exosome core complex of 9 subunits (Exo-9) is proposed to play a pivotal role in the binding and presentation of RNA for ribonucleolysis, and to serve as a scaffold for the association with catalytic subunits and accessory proteins or complexes. EXOSC2 as peripheral part of the Exo-9 complex stabilizes the hexameric ring of RNase PH-domain subunits through contacts with EXOSC4 and EXOSC7. In Bos taurus (Bovine), this protein is Exosome complex component RRP4 (EXOSC2).